The sequence spans 40 residues: Photosystem II reaction center protein Y (40 aa).

Residues 5–23 (LIVVLAPILLAGGWAVFNI) traverse the membrane as a helical segment.

It belongs to the PsbY family. PSII is composed of 1 copy each of membrane proteins PsbA, PsbB, PsbC, PsbD, PsbE, PsbF, PsbH, PsbI, PsbJ, PsbK, PsbL, PsbM, PsbT, PsbX, PsbY, PsbZ, Psb30/Ycf12, peripheral proteins PsbO, CyanoQ (PsbQ), PsbU, PsbV and a large number of cofactors. It forms dimeric complexes.

It localises to the cellular thylakoid membrane. Loosely associated component of the core of photosystem II (PSII), it is not always seen in crystals. PSII is a light-driven water plastoquinone oxidoreductase, using light energy to abstract electrons from H(2)O, generating a proton gradient subsequently used for ATP formation. The sequence is that of Photosystem II reaction center protein Y from Synechococcus elongatus (strain ATCC 33912 / PCC 7942 / FACHB-805) (Anacystis nidulans R2).